A 465-amino-acid chain; its full sequence is Iron-sulfur cluster assembly SufBD family protein SERP0500 (465 aa).

It belongs to the iron-sulfur cluster assembly SufBD family.

The protein is Iron-sulfur cluster assembly SufBD family protein SERP0500 of Staphylococcus epidermidis (strain ATCC 35984 / DSM 28319 / BCRC 17069 / CCUG 31568 / BM 3577 / RP62A).